The chain runs to 535 residues: Ribonuclease Y (535 aa).

Residues 4–24 (IILLIVSALIGLILGYALISI) traverse the membrane as a helical segment. Positions 118-141 (ENLSSKEKVLDSKEQSLTDKSKHI) are disordered. The region spanning 225–285 (TITSVHLPDD…IRREIARMTL (61 aa)) is the KH domain. An HD domain is found at 351–444 (VLRHSVEVGK…VAAADALSSA (94 aa)).

Belongs to the RNase Y family.

The protein resides in the cell membrane. Endoribonuclease that initiates mRNA decay. The protein is Ribonuclease Y of Streptococcus pyogenes serotype M2 (strain MGAS10270).